Consider the following 185-residue polypeptide: Elongation factor P (185 aa).

Belongs to the elongation factor P family.

The protein resides in the cytoplasm. It functions in the pathway protein biosynthesis; polypeptide chain elongation. Involved in peptide bond synthesis. Stimulates efficient translation and peptide-bond synthesis on native or reconstituted 70S ribosomes in vitro. Probably functions indirectly by altering the affinity of the ribosome for aminoacyl-tRNA, thus increasing their reactivity as acceptors for peptidyl transferase. In Finegoldia magna (strain ATCC 29328 / DSM 20472 / WAL 2508) (Peptostreptococcus magnus), this protein is Elongation factor P.